The primary structure comprises 114 residues: T cell receptor beta variable 5-6 (114 aa).

A signal peptide spans Met-1–Ala-21. An Ig-like domain is found at Gly-22–Leu-114. A disulfide bond links Cys-42 and Cys-110. N-linked (GlcNAc...) asparagine glycosylation is present at Asn-90.

Alpha-beta TR is a heterodimer composed of an alpha and beta chain; disulfide-linked. The alpha-beta TR is associated with the transmembrane signaling CD3 coreceptor proteins to form the TR-CD3 (TcR or TCR). The assembly of alpha-beta TR heterodimers with CD3 occurs in the endoplasmic reticulum where a single alpha-beta TR heterodimer associates with one CD3D-CD3E heterodimer, one CD3G-CD3E heterodimer and one CD247 homodimer forming a stable octameric structure. CD3D-CD3E and CD3G-CD3E heterodimers preferentially associate with TR alpha and TR beta chains, respectively. The association of the CD247 homodimer is the last step of TcR assembly in the endoplasmic reticulum and is required for transport to the cell surface.

Its subcellular location is the cell membrane. In terms of biological role, v region of the variable domain of T cell receptor (TR) beta chain that participates in the antigen recognition. Alpha-beta T cell receptors are antigen specific receptors which are essential to the immune response and are present on the cell surface of T lymphocytes. Recognize peptide-major histocompatibility (MH) (pMH) complexes that are displayed by antigen presenting cells (APC), a prerequisite for efficient T cell adaptive immunity against pathogens. Binding of alpha-beta TR to pMH complex initiates TR-CD3 clustering on the cell surface and intracellular activation of LCK that phosphorylates the ITAM motifs of CD3G, CD3D, CD3E and CD247 enabling the recruitment of ZAP70. In turn ZAP70 phosphorylates LAT, which recruits numerous signaling molecules to form the LAT signalosome. The LAT signalosome propagates signal branching to three major signaling pathways, the calcium, the mitogen-activated protein kinase (MAPK) kinase and the nuclear factor NF-kappa-B (NF-kB) pathways, leading to the mobilization of transcription factors that are critical for gene expression and essential for T cell growth and differentiation. The T cell repertoire is generated in the thymus, by V-(D)-J rearrangement. This repertoire is then shaped by intrathymic selection events to generate a peripheral T cell pool of self-MH restricted, non-autoaggressive T cells. Post-thymic interaction of alpha-beta TR with the pMH complexes shapes TR structural and functional avidity. The polypeptide is T cell receptor beta variable 5-6 (Homo sapiens (Human)).